The primary structure comprises 87 residues: DNA-directed RNA polymerase subunit omega (87 aa).

This sequence belongs to the RNA polymerase subunit omega family. In terms of assembly, the RNAP catalytic core consists of 2 alpha, 1 beta, 1 beta' and 1 omega subunit. When a sigma factor is associated with the core the holoenzyme is formed, which can initiate transcription.

The catalysed reaction is RNA(n) + a ribonucleoside 5'-triphosphate = RNA(n+1) + diphosphate. Its function is as follows. Promotes RNA polymerase assembly. Latches the N- and C-terminal regions of the beta' subunit thereby facilitating its interaction with the beta and alpha subunits. This Pseudomonas fluorescens (strain Pf0-1) protein is DNA-directed RNA polymerase subunit omega.